The chain runs to 379 residues: Cytochrome b (379 aa).

4 consecutive transmembrane segments (helical) span residues 33–53 (FGSL…FLAM), 77–98 (WTIR…FIHV), 113–133 (WNVG…GYVL), and 178–198 (FFAL…IHLL). Heme b contacts are provided by histidine 83 and histidine 97. Heme b-binding residues include histidine 182 and histidine 196. Histidine 201 serves as a coordination point for a ubiquinone. Transmembrane regions (helical) follow at residues 226 to 246 (TKDF…ALFY), 288 to 308 (LGGV…PFLQ), 320 to 340 (LSQF…WIGG), and 347 to 367 (FINI…FIMP).

The protein belongs to the cytochrome b family. The cytochrome bc1 complex contains 11 subunits: 3 respiratory subunits (MT-CYB, CYC1 and UQCRFS1), 2 core proteins (UQCRC1 and UQCRC2) and 6 low-molecular weight proteins (UQCRH/QCR6, UQCRB/QCR7, UQCRQ/QCR8, UQCR10/QCR9, UQCR11/QCR10 and a cleavage product of UQCRFS1). This cytochrome bc1 complex then forms a dimer. Heme b is required as a cofactor.

It is found in the mitochondrion inner membrane. In terms of biological role, component of the ubiquinol-cytochrome c reductase complex (complex III or cytochrome b-c1 complex) that is part of the mitochondrial respiratory chain. The b-c1 complex mediates electron transfer from ubiquinol to cytochrome c. Contributes to the generation of a proton gradient across the mitochondrial membrane that is then used for ATP synthesis. This Lepilemur dorsalis (Grey-backed sportive lemur) protein is Cytochrome b (MT-CYB).